Consider the following 401-residue polypeptide: MKFKAIVSLSLAVSMSLFPFLVEAASNDGVESPKTVSEINVSHEKGAYVQGEVIVQFKEQVNAEEKAKALKEVGATAVPDNDRVKSKFNVLKVGNVEAVVKALNNNPLVEYAEPNYLFNAAWTPNDTYYQGYQYGPQNTYTDYAWDVTKGSSGQEIAVIDTGVDYTHPDLDGKVIKGYDFVDNDYDPMDLNNHGTHVAGIAAAETNNATGIAGMAPNTRILAVRALDRNGSGTLSDIADAIIYAADSGAEVINLSLGCDCHTTTLENAVNYAWNKGSVVVAAAGNNGSSTTFEPASYENVIAVGAVDQYDRLASFSNYGTWVDVVAPGVDIVSTITGNRYAYMSGTSMASPHVAGLAALLASQGRNNIEIRQAIEQTADKISGTGTYFKYGRINSYNAVTY.

Residues 1–24 (MKFKAIVSLSLAVSMSLFPFLVEA) form the signal peptide. A propeptide spanning residues 25 to 121 (ASNDGVESPK…AEPNYLFNAA (97 aa)) is cleaved from the precursor. Asp-126 is a Ca(2+) binding site. One can recognise a Peptidase S8 domain in the interval 133 to 399 (QYGPQNTYTD…YGRINSYNAV (267 aa)). Asp-160 acts as the Charge relay system in catalysis. The Ca(2+) site is built by Pro-168, Asp-169, Asp-171, Asp-179, Asp-184, and Asp-186. The active-site Charge relay system is His-193. Glu-204, Asn-207, Thr-209, and Ile-211 together coordinate Ca(2+). Cys-258 and Cys-260 are oxidised to a cystine. Residues Tyr-297, Val-300, and Asp-323 each coordinate Na(+). Ser-347 functions as the Charge relay system in the catalytic mechanism.

This sequence belongs to the peptidase S8 family. Requires Ca(2+) as cofactor. It depends on Na(+) as a cofactor.

It is found in the secreted. The chain is Thermophilic serine proteinase from Bacillus sp. (strain AK1).